The chain runs to 887 residues: Cadherin-1 (887 aa).

The signal sequence occupies residues 1–26; sequence MGRRWGSPALQRFPVLVLLLLLQVCG. Residues 27–160 constitute a propeptide that is removed on maturation; it reads RRCDEAAPCQ…DPGFLRRQKR (134 aa). 5 Cadherin domains span residues 161-268, 269-381, 382-493, 494-599, and 600-704; these read DWVI…KPVF, IKEV…IPIF, NPTM…PPVF, VPPI…DNGP, and TPEP…RRSY. Topologically, residues 161 to 714 are extracellular; it reads DWVIPPISCL…IVGGLGVPAI (554 aa). Residue D263 participates in Ca(2+) binding. N291 carries an N-linked (GlcNAc...) asparagine glycan. D294 serves as a coordination point for Ca(2+). N346 is a glycosylation site (N-linked (GlcNAc...) asparagine). N564 and N643 each carry an N-linked (GlcNAc...) asparagine glycan. The chain crosses the membrane as a helical span at residues 715-735; the sequence is LGILGGILALLILLLLLLLFA. Topologically, residues 736–887 are cytoplasmic; sequence RRRKVEKEPL…ELYGGGEDDE (152 aa). The segment at 745–770 is disordered; it reads LLPPEDDMRDNVYNYDEEGGGEEDQD. The segment covering 759-770 has biased composition (acidic residues); sequence YDEEGGGEEDQD.

Homodimer. Interacts with CTNNA2. As to expression, expressed in the liver.

Its subcellular location is the cell junction. The protein localises to the adherens junction. The protein resides in the cell membrane. It is found in the endosome. It localises to the golgi apparatus. Its subcellular location is the trans-Golgi network. The protein localises to the cytoplasm. The protein resides in the desmosome. Cadherins are calcium-dependent cell adhesion proteins. They preferentially interact with themselves in a homophilic manner in connecting cells; cadherins may thus contribute to the sorting of heterogeneous cell types. Promotes organization of radial actin fiber structure and cellular response to contractile forces, via anchoring of radial actin fibers to CDH1 junction complexes at the cell membrane. E-cadherin is a ligand for integrin alpha-E/beta-7. This Gallus gallus (Chicken) protein is Cadherin-1 (CDH1).